We begin with the raw amino-acid sequence, 389 residues long: Protein IQ-domain 26 (389 aa).

IQ domains are found at residues Glu-106–Lys-134 and Leu-135–Ala-157. Residues Ala-137–Thr-151 form a calmodulin-binding region. Residues Ser-347–Tyr-374 form a disordered region.

It belongs to the IQD family. In terms of assembly, binds to multiple calmodulin (CaM) in the presence of Ca(2+) and CaM-like proteins.

It localises to the cell membrane. It is found in the cytoplasm. The protein localises to the cytoskeleton. Functionally, may be involved in cooperative interactions with calmodulins or calmodulin-like proteins. Recruits calmodulin proteins to microtubules, thus being a potential scaffold in cellular signaling and trafficking. May associate with nucleic acids and regulate gene expression at the transcriptional or post-transcriptional level. The chain is Protein IQ-domain 26 from Arabidopsis thaliana (Mouse-ear cress).